The chain runs to 259 residues: O-antigen export system permease protein RfbA (259 aa).

A run of 6 helical transmembrane segments spans residues 33 to 53 (FGYLWSIANPLLFAMIYYFIF), 73 to 95 (FPWQWFASSATNSLFSFIANAQI), 111 to 131 (VMMEGLHFLCTIPVIIAFLFV), 142 to 162 (WGIPIIAIGQVIFTFGISIIF), 176 to 196 (VSLGIMLMFYCTPILYASDMI), and 228 to 248 (EYISILYITGFILTIVGLAIF). Positions 33-251 (FGYLWSIANP…IVGLAIFNKL (219 aa)) constitute an ABC transmembrane type-2 domain.

It belongs to the ABC-2 integral membrane protein family.

The protein localises to the cell inner membrane. In terms of biological role, may form an ATP-driven O-antigen export apparatus, in association with RfbB. The sequence is that of O-antigen export system permease protein RfbA (rfbA) from Klebsiella pneumoniae.